A 194-amino-acid chain; its full sequence is dITP/XTP pyrophosphatase (194 aa).

8-13 (TGNPGK) is a substrate binding site. Mg(2+)-binding residues include E38 and D67. D67 functions as the Proton acceptor in the catalytic mechanism. Substrate contacts are provided by residues S68, 146–149 (FGYD), K169, and 174–175 (HR).

The protein belongs to the HAM1 NTPase family. In terms of assembly, homodimer. It depends on Mg(2+) as a cofactor.

It carries out the reaction XTP + H2O = XMP + diphosphate + H(+). The enzyme catalyses dITP + H2O = dIMP + diphosphate + H(+). It catalyses the reaction ITP + H2O = IMP + diphosphate + H(+). Functionally, pyrophosphatase that catalyzes the hydrolysis of nucleoside triphosphates to their monophosphate derivatives, with a high preference for the non-canonical purine nucleotides XTP (xanthosine triphosphate), dITP (deoxyinosine triphosphate) and ITP. Seems to function as a house-cleaning enzyme that removes non-canonical purine nucleotides from the nucleotide pool, thus preventing their incorporation into DNA/RNA and avoiding chromosomal lesions. The sequence is that of dITP/XTP pyrophosphatase from Synechocystis sp. (strain ATCC 27184 / PCC 6803 / Kazusa).